A 206-amino-acid chain; its full sequence is Cytidylate kinase (206 aa).

9-17 provides a ligand contact to ATP; it reads GPAAAGKGT. Positions 155–168 are enriched in basic and acidic residues; the sequence is LRERDRRDREREAA. Residues 155–174 form a disordered region; the sequence is LRERDRRDREREAAPLRPAP.

This sequence belongs to the cytidylate kinase family. Type 1 subfamily.

The protein localises to the cytoplasm. The enzyme catalyses CMP + ATP = CDP + ADP. The catalysed reaction is dCMP + ATP = dCDP + ADP. The polypeptide is Cytidylate kinase (Cereibacter sphaeroides (strain KD131 / KCTC 12085) (Rhodobacter sphaeroides)).